Reading from the N-terminus, the 382-residue chain is Dual-specificity RNA methyltransferase RlmN (382 aa).

E96 serves as the catalytic Proton acceptor. Residues 102–342 form the Radical SAM core domain; the sequence is QGKRGTLCVS…VRTTRGEDID (241 aa). Cysteines 109 and 345 form a disulfide. [4Fe-4S] cluster is bound by residues C116, C120, and C123. Residues 170 to 171, S202, 224 to 226, and N302 contribute to the S-adenosyl-L-methionine site; these read GE and SLH. Residue C345 is the S-methylcysteine intermediate of the active site.

Belongs to the radical SAM superfamily. RlmN family. The cofactor is [4Fe-4S] cluster.

It localises to the cytoplasm. The enzyme catalyses adenosine(2503) in 23S rRNA + 2 reduced [2Fe-2S]-[ferredoxin] + 2 S-adenosyl-L-methionine = 2-methyladenosine(2503) in 23S rRNA + 5'-deoxyadenosine + L-methionine + 2 oxidized [2Fe-2S]-[ferredoxin] + S-adenosyl-L-homocysteine. It carries out the reaction adenosine(37) in tRNA + 2 reduced [2Fe-2S]-[ferredoxin] + 2 S-adenosyl-L-methionine = 2-methyladenosine(37) in tRNA + 5'-deoxyadenosine + L-methionine + 2 oxidized [2Fe-2S]-[ferredoxin] + S-adenosyl-L-homocysteine. Its function is as follows. Specifically methylates position 2 of adenine 2503 in 23S rRNA and position 2 of adenine 37 in tRNAs. m2A2503 modification seems to play a crucial role in the proofreading step occurring at the peptidyl transferase center and thus would serve to optimize ribosomal fidelity. The sequence is that of Dual-specificity RNA methyltransferase RlmN from Pseudomonas syringae pv. tomato (strain ATCC BAA-871 / DC3000).